The primary structure comprises 335 residues: MKGIFEKLKRRIDILLYKLGIRPLSIETLKELKESRKEREVLEFYDVYMEPEEFVDIEKYEFILYEGDIVGKTAESLSKIFKGNLFPSRNELRYMGVKDEVAYFKKVVIYMIITFLALLFMGLLDNNLLQGFVNGLIGAGIILVLSLFYPKIRLILFKGEIKLQILFTLIYMISILRAGASLPEVLESISKSREYGVVAFEAKSIIRDVNIGGYNLVEALERAKMRTRIPILKKLYDQMIVGYNKGNLPLLLGKLYEDIVRESMVKLDSSKFMIQNLGNLAFGVGLILPFTGMILSTMIGNQGFSGILSTINLLLLKIGPLLTLIFGIFVKLKIE.

The next 4 helical transmembrane spans lie at 104–124 (FKKV…MGLL), 128–148 (LLQG…LSLF), 280–300 (LAFG…TMIG), and 310–330 (TINL…GIFV).

It localises to the cell membrane. This is an uncharacterized protein from Methanocaldococcus jannaschii (strain ATCC 43067 / DSM 2661 / JAL-1 / JCM 10045 / NBRC 100440) (Methanococcus jannaschii).